The chain runs to 503 residues: Lanosterol 14-alpha demethylase (503 aa).

The chain crosses the membrane as a helical span at residues 24 to 44 (GNLLSTLLIACAFTLSLVYLF). A heme-binding site is contributed by Cys-449.

Belongs to the cytochrome P450 family. Heme serves as cofactor. Ubiquitinated by MARCHF6, leading to proteasomal degradation.

The protein resides in the endoplasmic reticulum membrane. It is found in the microsome membrane. It carries out the reaction a 14alpha-methyl steroid + 3 reduced [NADPH--hemoprotein reductase] + 3 O2 = a Delta(14) steroid + formate + 3 oxidized [NADPH--hemoprotein reductase] + 4 H2O + 4 H(+). The catalysed reaction is lanosterol + 3 reduced [NADPH--hemoprotein reductase] + 3 O2 = 4,4-dimethyl-5alpha-cholesta-8,14,24-trien-3beta-ol + formate + 3 oxidized [NADPH--hemoprotein reductase] + 4 H2O + 4 H(+). It catalyses the reaction 24,25-dihydrolanosterol + 3 reduced [NADPH--hemoprotein reductase] + 3 O2 = 4,4-dimethyl-8,14-cholestadien-3beta-ol + formate + 3 oxidized [NADPH--hemoprotein reductase] + 4 H2O + 4 H(+). The enzyme catalyses a 14alpha-methyl steroid + reduced [NADPH--hemoprotein reductase] + O2 = a 14alpha-hydroxymethyl steroid + oxidized [NADPH--hemoprotein reductase] + H2O + H(+). It carries out the reaction a 14alpha-hydroxymethyl steroid + reduced [NADPH--hemoprotein reductase] + O2 = a 14alpha-formyl steroid + oxidized [NADPH--hemoprotein reductase] + 2 H2O + H(+). The catalysed reaction is a 14alpha-formyl steroid + reduced [NADPH--hemoprotein reductase] + O2 = a Delta(14) steroid + formate + oxidized [NADPH--hemoprotein reductase] + H2O + 2 H(+). It catalyses the reaction lanosterol + reduced [NADPH--hemoprotein reductase] + O2 = 32-hydroxylanosterol + oxidized [NADPH--hemoprotein reductase] + H2O + H(+). The enzyme catalyses 32-hydroxylanosterol + reduced [NADPH--hemoprotein reductase] + O2 = 32-oxolanosterol + oxidized [NADPH--hemoprotein reductase] + 2 H2O + H(+). It carries out the reaction 32-oxolanosterol + reduced [NADPH--hemoprotein reductase] + O2 = 4,4-dimethyl-5alpha-cholesta-8,14,24-trien-3beta-ol + formate + oxidized [NADPH--hemoprotein reductase] + H2O + 2 H(+). The catalysed reaction is 24,25-dihydrolanosterol + reduced [NADPH--hemoprotein reductase] + O2 = 32-hydroxy-24,25-dihydrolanosterol + oxidized [NADPH--hemoprotein reductase] + H2O + H(+). It catalyses the reaction 32-hydroxy-24,25-dihydrolanosterol + reduced [NADPH--hemoprotein reductase] + O2 = 32-oxo-24,25-dihydrolanosterol + oxidized [NADPH--hemoprotein reductase] + 2 H2O + H(+). The enzyme catalyses 32-oxo-24,25-dihydrolanosterol + reduced [NADPH--hemoprotein reductase] + O2 = 4,4-dimethyl-8,14-cholestadien-3beta-ol + formate + oxidized [NADPH--hemoprotein reductase] + H2O + 2 H(+). It functions in the pathway steroid biosynthesis; zymosterol biosynthesis; zymosterol from lanosterol: step 1/6. Its activity is regulated as follows. Inhibited by azalanstat. Inhibited by azole antifungal agents ketoconazole, itraconazole and fluconazole. Functionally, sterol 14alpha-demethylase that plays a critical role in the cholesterol biosynthesis pathway, being cholesterol the major sterol component in mammalian membranes as well as a precursor for bile acid and steroid hormone synthesis. Cytochrome P450 monooxygenase that catalyzes the three-step oxidative removal of the 14alpha-methyl group (C-32) of sterols such as lanosterol (lanosta-8,24-dien-3beta-ol) and 24,25-dihydrolanosterol (DHL) in the form of formate, and converts the sterols to 4,4-dimethyl-5alpha-cholesta-8,14,24-trien-3beta-ol and 4,4-dimethyl-8,14-cholestadien-3beta-ol, respectively, which are intermediates of cholesterol biosynthesis. Can also demethylate substrates not intrinsic to mammals, such as eburicol (24-methylene-24,25-dihydrolanosterol), but at a lower rate than DHL. This chain is Lanosterol 14-alpha demethylase, found in Mus musculus (Mouse).